A 185-amino-acid polypeptide reads, in one-letter code: TATA-box-binding protein (185 aa).

2 tandem repeats follow at residues 3–78 (IQNI…REDL) and 94–176 (IQNI…AEKI).

Belongs to the TBP family.

General factor that plays a role in the activation of archaeal genes transcribed by RNA polymerase. Binds specifically to the TATA box promoter element which lies close to the position of transcription initiation. In Methanopyrus kandleri (strain AV19 / DSM 6324 / JCM 9639 / NBRC 100938), this protein is TATA-box-binding protein.